A 163-amino-acid chain; its full sequence is Globin CTT-V (163 aa).

The N-terminal stretch at 1–16 is a signal peptide; the sequence is MKFFAVLTLCIIGAIA. In terms of domain architecture, Globin spans 18-163; sequence PLTSDEANLV…YTVAFEVIPA (146 aa). Residues histidine 76 and histidine 111 each contribute to the heme b site.

This sequence belongs to the globin family.

This is Globin CTT-V (CTT-V) from Chironomus thummi piger (Midge).